Consider the following 860-residue polypeptide: DNA mismatch repair protein MutS (860 aa).

607 to 614 (GPNMSGKS) is an ATP binding site.

Belongs to the DNA mismatch repair MutS family.

In terms of biological role, this protein is involved in the repair of mismatches in DNA. It is possible that it carries out the mismatch recognition step. This protein has a weak ATPase activity. This Listeria innocua serovar 6a (strain ATCC BAA-680 / CLIP 11262) protein is DNA mismatch repair protein MutS.